The primary structure comprises 737 residues: Fibronectin type III domain-containing protein 7 (737 aa).

The N-terminal stretch at 1–25 (MAGRPEKCFSLIRFTLLCLKMVISS) is a signal peptide. 8 Fibronectin type-III domains span residues 28–115 (APEI…TVLA), 116–203 (APVL…SPRA), 204–288 (PANI…TVAC), 289–373 (APGR…TAPC), 374–459 (CPND…TAPC), 460–544 (SPEI…TVPC), 545–633 (CPAG…CPLG), and 631–715 (PLGV…YSVT). An N-linked (GlcNAc...) asparagine glycan is attached at Asn-230. Asn-433 carries an N-linked (GlcNAc...) asparagine glycan.

The protein localises to the secreted. The chain is Fibronectin type III domain-containing protein 7 (Fndc7) from Mus musculus (Mouse).